The chain runs to 327 residues: Metal-binding protein YtgA (327 aa).

An N-terminal signal peptide occupies residues 1-20 (MDAKMGYIFKVMRWIFCFVA). Fe(2+) contacts are provided by His73, His139, His205, and Asp297.

It belongs to the bacterial solute-binding protein 9 family. As to quaternary structure, monomer.

Its subcellular location is the periplasm. Part of the ATP-binding cassette (ABC) transport system YtgABCD involved in metal import. Binds Fe(2+), Mn(2+) and Ni(2+), with a preference for Fe(2+) and delivers them to the membrane permease for translocation into the cytoplasm. In Chlamydia pneumoniae (Chlamydophila pneumoniae), this protein is Metal-binding protein YtgA.